The sequence spans 117 residues: Large ribosomal subunit protein uL18 (117 aa).

This sequence belongs to the universal ribosomal protein uL18 family. As to quaternary structure, part of the 50S ribosomal subunit; part of the 5S rRNA/L5/L18/L25 subcomplex. Contacts the 5S and 23S rRNAs.

In terms of biological role, this is one of the proteins that bind and probably mediate the attachment of the 5S RNA into the large ribosomal subunit, where it forms part of the central protuberance. This Enterobacter sp. (strain 638) protein is Large ribosomal subunit protein uL18.